A 159-amino-acid chain; its full sequence is Cyanate hydratase (159 aa).

Residues Arg-103, Glu-106, and Ser-129 contribute to the active site.

The protein belongs to the cyanase family.

The enzyme catalyses cyanate + hydrogencarbonate + 3 H(+) = NH4(+) + 2 CO2. Functionally, catalyzes the reaction of cyanate with bicarbonate to produce ammonia and carbon dioxide. The sequence is that of Cyanate hydratase from Blastomyces gilchristii (strain SLH14081) (Blastomyces dermatitidis).